Reading from the N-terminus, the 241-residue chain is Pyridoxine 5'-phosphate synthase (241 aa).

3-amino-2-oxopropyl phosphate is bound at residue Asn7. Asp9–His10 is a 1-deoxy-D-xylulose 5-phosphate binding site. Residue Arg18 coordinates 3-amino-2-oxopropyl phosphate. His43 functions as the Proton acceptor in the catalytic mechanism. The 1-deoxy-D-xylulose 5-phosphate site is built by Arg45 and His50. The active-site Proton acceptor is Glu70. Position 100 (Thr100) interacts with 1-deoxy-D-xylulose 5-phosphate. His191 (proton donor) is an active-site residue. 3-amino-2-oxopropyl phosphate is bound by residues Gly192 and Gly213–His214.

This sequence belongs to the PNP synthase family. Homooctamer; tetramer of dimers.

It is found in the cytoplasm. It catalyses the reaction 3-amino-2-oxopropyl phosphate + 1-deoxy-D-xylulose 5-phosphate = pyridoxine 5'-phosphate + phosphate + 2 H2O + H(+). It participates in cofactor biosynthesis; pyridoxine 5'-phosphate biosynthesis; pyridoxine 5'-phosphate from D-erythrose 4-phosphate: step 5/5. Functionally, catalyzes the complicated ring closure reaction between the two acyclic compounds 1-deoxy-D-xylulose-5-phosphate (DXP) and 3-amino-2-oxopropyl phosphate (1-amino-acetone-3-phosphate or AAP) to form pyridoxine 5'-phosphate (PNP) and inorganic phosphate. The sequence is that of Pyridoxine 5'-phosphate synthase from Solidesulfovibrio magneticus (strain ATCC 700980 / DSM 13731 / RS-1) (Desulfovibrio magneticus).